The following is a 620-amino-acid chain: Glutathione-regulated potassium-efflux system protein KefC (620 aa).

The next 12 membrane-spanning stretches (helical) occupy residues 4–24, 26–46, 54–74, 90–110, 114–134, 149–169, 178–198, 218–238, 270–290, 294–314, 327–347, and 359–379; these read HTLIQALIYLGSAALIVPIAV, LGLGSVLGYLIAGCIIGPWGL, SILHFAEIGVVLMLFIIGLEL, GALQMVICGGLLGLFCMLLGL, VAELIGMTLALSSTAIAMQAM, FAVLLFQDIAAIPLVAMIPLL, MGAFALSALKVAGALVLVVLL, VFSAVALFLVFGFGLLLEEVG, GLLLGLFFIGVGMSIDFGTLL, LRIVILLLGFLIIKIAMLWLI, WFAVLLGQGSEFAFVVFGAAQ, and SLTLAVALSMAATPILLVILN. The 120-residue stretch at 399-518 folds into the RCK N-terminal domain; that stretch reads QPRVIIAGFG…AGVEKPERET (120 aa). The disordered stretch occupies residues 597 to 620; it reads GWQGTEEGKHTGNMADEPETKPSS.

Belongs to the monovalent cation:proton antiporter 2 (CPA2) transporter (TC 2.A.37) family. KefC subfamily. In terms of assembly, homodimer. Interacts with the regulatory subunit KefF.

It localises to the cell inner membrane. Functionally, pore-forming subunit of a potassium efflux system that confers protection against electrophiles. Catalyzes K(+)/H(+) antiport. This is Glutathione-regulated potassium-efflux system protein KefC from Escherichia coli O7:K1 (strain IAI39 / ExPEC).